The following is an 840-amino-acid chain: MIFTLKLFKKLFRNRNERILVHMKKIVDMINYMEKDMEKLNDNQLSNKTNEFRMQIKSGINIEELLPQAFAVVRESVKRIFNIRLFDVQMLGGIVLNNRCIAEMRTGEGKTLTATLPAYLNALTGKGVHIVTVNNYLAHRDATYNQPLFEFLGLNVGINLPGQTVCAKKIAYESDITYGTNNEYGFDYLRDNMVFNVKEQVQRELHYALIDEVDSILIDEARTPLIISGPSDDASLSYLKINELVCNIIKRNIDHCKYPEKEEYFTVDEKSRQVVLTEIGLILIEKLLIESGMMGMGESLYSSDNIILLHHVNSALRAHILFACEVDYIVKNGEILIIDEHTGRVMPGRRWSDGLHQAIEAKERVRIQNENQTLASITFQNYFRLYEKLSGMTGTASTESFEFKSIYKLDTVVIPTNQPMIRIDFPDVIYMTEIEKINAIVSDIKDCVNRKQPVLVGTVSIDKSEIISRALKKEGILHKVLNAKIHAAEADIIAQAGYPGAVTIATNMAGRGTDIVLGGNWRSEIAALRNANTHAMLRIKSDWKERHDSVLKSGGLHVIGTERHESRRIDNQLRGRSGRQGDAGSSRFYLSMEDSLIRIFASNKLVDLMKRMGMKSGESIEHPWITKAIAHAQKKVESRNFDIRKQLLEYDDVANDQRRVIYEQRNKLLAMLDVSEVIHNIRYDVVDRILNIYIPLEIIENKKDLIKLEKCLKDDFNLVLSFSEQLDEDTSLYEGKEKIRVCILTEMIKQYKCVKEMVGINVMNAIEKGIILKTFDALWKEHLASMDYLRQGIHLRGYAQKDPKQEYKKESFSMFKKMLDHLQYEIISEISKLQKLNRSN.

Residues Gln89, Gly107–Thr111, and Asp514 contribute to the ATP site.

This sequence belongs to the SecA family. As to quaternary structure, monomer and homodimer. Part of the essential Sec protein translocation apparatus which comprises SecA, SecYEG and auxiliary proteins SecDF-YajC and YidC.

The protein resides in the cell inner membrane. Its subcellular location is the cytoplasm. The enzyme catalyses ATP + H2O + cellular proteinSide 1 = ADP + phosphate + cellular proteinSide 2.. Part of the Sec protein translocase complex. Interacts with the SecYEG preprotein conducting channel. Has a central role in coupling the hydrolysis of ATP to the transfer of proteins into and across the cell membrane, serving as an ATP-driven molecular motor driving the stepwise translocation of polypeptide chains across the membrane. The polypeptide is Protein translocase subunit SecA (Blochmanniella floridana).